The chain runs to 127 residues: Aspartate 1-decarboxylase (127 aa).

Ser25 (schiff-base intermediate with substrate; via pyruvic acid) is an active-site residue. At Ser25 the chain carries Pyruvic acid (Ser). Thr57 serves as a coordination point for substrate. Catalysis depends on Tyr58, which acts as the Proton donor. Residue 73 to 75 (GAA) coordinates substrate.

The protein belongs to the PanD family. Heterooctamer of four alpha and four beta subunits. The cofactor is pyruvate. Is synthesized initially as an inactive proenzyme, which is activated by self-cleavage at a specific serine bond to produce a beta-subunit with a hydroxyl group at its C-terminus and an alpha-subunit with a pyruvoyl group at its N-terminus.

The protein resides in the cytoplasm. It carries out the reaction L-aspartate + H(+) = beta-alanine + CO2. The protein operates within cofactor biosynthesis; (R)-pantothenate biosynthesis; beta-alanine from L-aspartate: step 1/1. Catalyzes the pyruvoyl-dependent decarboxylation of aspartate to produce beta-alanine. The polypeptide is Aspartate 1-decarboxylase (Staphylococcus aureus (strain JH1)).